The primary structure comprises 170 residues: Cytochrome c-type biogenesis protein CcmE (170 aa).

Over 1-7 (MTRKQRR) the chain is Cytoplasmic. Residues 8–28 (LTIIGGALFVLAVAAGLVLNA) traverse the membrane as a helical; Signal-anchor for type II membrane protein segment. Residues 29 to 170 (LRDSIVFFST…GEKTAAGATQ (142 aa)) lie on the Periplasmic side of the membrane. Heme-binding residues include His-122 and Tyr-126. Over residues 137 to 146 (KQGHWKDDYG) the composition is skewed to basic and acidic residues. The disordered stretch occupies residues 137–170 (KQGHWKDDYGKPQAAKPGPVSMREGEKTAAGATQ).

The protein belongs to the CcmE/CycJ family.

It localises to the cell inner membrane. Heme chaperone required for the biogenesis of c-type cytochromes. Transiently binds heme delivered by CcmC and transfers the heme to apo-cytochromes in a process facilitated by CcmF and CcmH. The protein is Cytochrome c-type biogenesis protein CcmE of Bradyrhizobium sp. (strain BTAi1 / ATCC BAA-1182).